Here is a 169-residue protein sequence, read N- to C-terminus: Ribosome maturation factor RimM (169 aa).

Residues Glu96–Glu166 form the PRC barrel domain.

Belongs to the RimM family. Binds ribosomal protein uS19.

It localises to the cytoplasm. Its function is as follows. An accessory protein needed during the final step in the assembly of 30S ribosomal subunit, possibly for assembly of the head region. Essential for efficient processing of 16S rRNA. May be needed both before and after RbfA during the maturation of 16S rRNA. It has affinity for free ribosomal 30S subunits but not for 70S ribosomes. The sequence is that of Ribosome maturation factor RimM from Acidiphilium cryptum (strain JF-5).